The sequence spans 196 residues: Carnitine operon protein CaiE (196 aa).

Positions 173–196 (TQPLRQMEENRPRLQGTTDVTPKR) are disordered. Positions 187–196 (QGTTDVTPKR) are enriched in polar residues.

This sequence belongs to the transferase hexapeptide repeat family.

Its pathway is amine and polyamine metabolism; carnitine metabolism. Overproduction of CaiE stimulates the activity of CaiB and CaiD. The protein is Carnitine operon protein CaiE of Escherichia coli O139:H28 (strain E24377A / ETEC).